We begin with the raw amino-acid sequence, 604 residues long: Beta-alanine transporter (604 aa).

Residues 1 to 23 are Cytoplasmic-facing; the sequence is MDFDEVLREVGSFGLYQKVIICS. Residues 24–44 traverse the membrane as a helical segment; that stretch reads VLLPAALPCAFHAYSQLFIAA. Topologically, residues 45–151 are extracellular; the sequence is TPQHFCRVPE…QEWNLVCDRS (107 aa). N68 and N88 each carry an N-linked (GlcNAc...) asparagine glycan. Residues 152–172 traverse the membrane as a helical segment; that stretch reads FLVTLALVVFGVGGLLGNYVF. Topologically, residues 173-182 are cytoplasmic; that stretch reads GYLVDLWGRR. A helical membrane pass occupies residues 183 to 203; sequence PSFYAYLLLEIIACAASAFAW. The Extracellular portion of the chain corresponds to 204–212; the sequence is NYYTWLGLR. Residues 213–233 form a helical membrane-spanning segment; the sequence is FVVGLTVPAILASPYVLAIEL. Topologically, residues 234 to 243 are cytoplasmic; the sequence is VGPERRVFCT. The helical transmembrane segment at 244–264 threads the bilayer; sequence IVSNIAYSLGLVVLAGVIYIV. The Extracellular segment spans residues 265–268; that stretch reads RDWR. Residues 269–289 form a helical membrane-spanning segment; the sequence is ELSLAVSMPLLMLFSCFFVLP. The Cytoplasmic segment spans residues 290–362; sequence ESPRWLMAVG…FRGPNMRRKT (73 aa). Residues 363–383 form a helical membrane-spanning segment; the sequence is LIITLIWFANTSVYVGLSYYA. Over 384-390 the chain is Extracellular; sequence PALGGDE. A helical transmembrane segment spans residues 391-411; it reads IWNFFLAGAVELPTYLLLWPG. At 412–418 the chain is on the cytoplasmic side; the sequence is LSYFGRR. The helical transmembrane segment at 419–439 threads the bilayer; it reads WILFISMLVGGVACVATFLYP. The Extracellular portion of the chain corresponds to 440 to 442; that stretch reads DIT. Residues 443–463 traverse the membrane as a helical segment; sequence LLLYCVGKMGISSSFVVLPLM. Topologically, residues 464–473 are cytoplasmic; sequence ASELYPTVVR. The chain crosses the membrane as a helical span at residues 474–494; it reads GLGMSFSSVISMVGPIVIPMI. At 495-501 the chain is on the extracellular side; sequence NHMGQQM. A helical membrane pass occupies residues 502 to 522; that stretch reads LVLPLIVMGALLILGGFASLL. Topologically, residues 523-604 are cytoplasmic; the sequence is LPETRNRNLP…SICKNEMRTL (82 aa).

This sequence belongs to the major facilitator (TC 2.A.1) superfamily. Organic cation transporter (TC 2.A.1.19) family. In terms of tissue distribution, expressed in the head and predominantly in the retinal pigment cells of the compound eye.

It localises to the cell membrane. Functionally, beta-alanine transporter required for the uptake of beta-alanine by the glia. Required for the recycling process of the neurotransmitter histamine in photoreceptor neurons of the compound eye and therefore for photoreceptor synaptic transmission. Following histamine release from photoreceptors and its uptake by glia, histamine is conjugated to beta-alanine by e/Ebony to form the inactive metabolite, carcinine. In Drosophila melanogaster (Fruit fly), this protein is Beta-alanine transporter.